The sequence spans 195 residues: Molybdenum cofactor guanylyltransferase (195 aa).

GTP contacts are provided by residues 10 to 12 (LAG), Lys-23, Asn-51, Asp-69, and Asp-99. A Mg(2+)-binding site is contributed by Asp-99.

Belongs to the MobA family. In terms of assembly, monomer. Mg(2+) serves as cofactor.

The protein resides in the cytoplasm. It catalyses the reaction Mo-molybdopterin + GTP + H(+) = Mo-molybdopterin guanine dinucleotide + diphosphate. In terms of biological role, transfers a GMP moiety from GTP to Mo-molybdopterin (Mo-MPT) cofactor (Moco or molybdenum cofactor) to form Mo-molybdopterin guanine dinucleotide (Mo-MGD) cofactor. In Histophilus somni (strain 129Pt) (Haemophilus somnus), this protein is Molybdenum cofactor guanylyltransferase.